A 267-amino-acid chain; its full sequence is MIAFPNAKINLGLHVIARRSDGYHDIETIFCPIDLCDILEIVSATQTKFIQSGIPMDCKVSNNLVMKAYQLLKKHYNLPEITIHLRKNIPIGAGLGGGSSDASFMLYLLSNLANLCLSIEELEAYAKQLGSDCPFFIRNKPVFAKGIGNIFTPIELDLKKYNLALVTTNIHISTSEAYTNIVVSHTPRESLTDIIHYPVDKWKNRLVNDFEEDIFPLYPEIREIKQELYNQGAIYASMSGSGSSVYGLFKKPYRPIGTFNFSIHNFI.

The active site involves Lys-8. An ATP-binding site is contributed by 90–100 (PIGAGLGGGSS). Residue Asp-132 is part of the active site.

It belongs to the GHMP kinase family. IspE subfamily.

The enzyme catalyses 4-CDP-2-C-methyl-D-erythritol + ATP = 4-CDP-2-C-methyl-D-erythritol 2-phosphate + ADP + H(+). It participates in isoprenoid biosynthesis; isopentenyl diphosphate biosynthesis via DXP pathway; isopentenyl diphosphate from 1-deoxy-D-xylulose 5-phosphate: step 3/6. Functionally, catalyzes the phosphorylation of the position 2 hydroxy group of 4-diphosphocytidyl-2C-methyl-D-erythritol. This Azobacteroides pseudotrichonymphae genomovar. CFP2 protein is 4-diphosphocytidyl-2-C-methyl-D-erythritol kinase.